Reading from the N-terminus, the 651-residue chain is Beta-glucuronidase (651 aa).

An N-terminal signal peptide occupies residues 1-22 (MARGSAVAWAAFGPLLWGCALG). N-linked (GlcNAc...) asparagine glycosylation is found at Asn173, Asn190, Asn272, and Asn420. Catalysis depends on Glu451, which acts as the Proton donor. N-linked (GlcNAc...) asparagine glycosylation is present at Asn631.

This sequence belongs to the glycosyl hydrolase 2 family. As to quaternary structure, homotetramer.

The protein localises to the lysosome. The enzyme catalyses a beta-D-glucuronoside + H2O = D-glucuronate + an alcohol. With respect to regulation, inhibited by L-aspartic acid. In terms of biological role, plays an important role in the degradation of dermatan and keratan sulfates. This is Beta-glucuronidase (GUSB) from Pongo abelii (Sumatran orangutan).